Consider the following 385-residue polypeptide: Glucans biosynthesis protein C (385 aa).

10 helical membrane passes run 17–37, 60–80, 91–111, 137–157, 173–193, 212–232, 245–262, 274–294, 311–331, and 338–358; these read AWLM…SHTW, MQVF…RYPL, VGIP…IMLQ, ISHL…VWIF, KFSM…YAVI, FIVM…LAFI, RGST…LLNQ, TESV…FSFG, ASLF…AYIT, and WLGF…LYEI.

The protein belongs to the acyltransferase 3 family. OpgC subfamily.

It is found in the cell membrane. It participates in glycan metabolism; osmoregulated periplasmic glucan (OPG) biosynthesis. Functionally, necessary for the succinyl substitution of periplasmic glucans. Could catalyze the transfer of succinyl residues from the cytoplasmic side of the membrane to the nascent glucan backbones on the periplasmic side of the membrane. This Escherichia coli O81 (strain ED1a) protein is Glucans biosynthesis protein C.